We begin with the raw amino-acid sequence, 1121 residues long: Phytochrome 2 (1121 aa).

The GAF domain maps to D214 to V393. Position 319 (C319) interacts with phytochromobilin. 2 consecutive PAS domains span residues V608–E679 and D742–M813. One can recognise a Histidine kinase domain in the interval Y893 to Q1113.

The protein belongs to the phytochrome family. As to quaternary structure, homodimer. In terms of processing, contains one covalently linked phytochromobilin chromophore.

Regulatory photoreceptor which exists in two forms that are reversibly interconvertible by light: the Pr form that absorbs maximally in the red region of the spectrum and the Pfr form that absorbs maximally in the far-red region. Photoconversion of Pr to Pfr induces an array of morphogenic responses, whereas reconversion of Pfr to Pr cancels the induction of those responses. Pfr controls the expression of a number of nuclear genes including those encoding the small subunit of ribulose-bisphosphate carboxylase, chlorophyll A/B binding protein, protochlorophyllide reductase, rRNA, etc. It also controls the expression of its own gene(s) in a negative feedback fashion. The protein is Phytochrome 2 (PHY2) of Ceratodon purpureus (Fire moss).